The primary structure comprises 212 residues: Ras-related protein Rab-2A (212 aa).

A2 carries the post-translational modification N-acetylalanine. A required for interaction with PRKCI region spans residues 2–19; the sequence is AYAYLFKYIIIGDTGVGK. The GTP site is built by G16, V17, G18, K19, S20, C21, and T38. Position 20 (S20) interacts with Mg(2+). The short motif at 37–42 is the Switch 1 element; it reads LTIGVE. The Mg(2+) site is built by T38 and D61. Positions 63–72 match the Switch 2 motif; sequence AGQESFRSIT. Positions 64, 119, 120, 122, 150, and 151 each coordinate GTP. 2 S-geranylgeranyl cysteine lipidation sites follow: C211 and C212.

This sequence belongs to the small GTPase superfamily. Rab family. As to quaternary structure, interacts with PRKCI. Interacts with TRIP11. Interacts (in GTP-bound form) with GARIN1B. Interacts (GTP-bound) with HOPS complex component VPS39; interaction contributes to obtaining a functional HOPS complex that promotes autophagosome-lysosome membrane fusion driven by STX17-SNAP29-VAMP8. May interact with VPS41. The cofactor is Mg(2+). Post-translationally, prenylated. Prenylation is required for association with cellular membranes. In terms of tissue distribution, brain and parietal cells.

Its subcellular location is the endoplasmic reticulum-Golgi intermediate compartment membrane. The protein resides in the melanosome. It is found in the endoplasmic reticulum membrane. The protein localises to the golgi apparatus membrane. It localises to the cytoplasmic vesicle. Its subcellular location is the secretory vesicle. The protein resides in the acrosome. It is found in the autophagosome membrane. The enzyme catalyses GTP + H2O = GDP + phosphate + H(+). Regulated by guanine nucleotide exchange factors (GEFs) which promote the exchange of bound GDP for free GTP, GTPase activating proteins (GAPs) which increase the GTP hydrolysis activity, and GDP dissociation inhibitors (GDIs) which inhibit the dissociation of the nucleotide from the GTPase. Its function is as follows. The small GTPases Rab are key regulators of intracellular membrane trafficking, from the formation of transport vesicles to their fusion with membranes. Rabs cycle between active GTP-bound and inactive GDP-bound states. In their active state, drive transport of vesicular carriers from donor organelles to acceptor organelles to regulate the membrane traffic that maintains organelle identity and morphology. RAB2A regulates autophagy by promoting autophagosome-lysosome fusion via recruitment of the HOPS endosomal tethering complex; this process involves autophagosomal RAB2A and lysosomal RAB39A recruitment of HOPS subcomplexes VPS39-VPS11 and VPS41-VPS16-VPS18-VPS33A, respectively, which assemble into a functional complex to mediate membrane tethering and SNAREs-driven membrane fusion. Required for protein transport from the endoplasmic reticulum to the Golgi complex. Regulates the compacted morphology of the Golgi. Together with RAB2B, redundantly required for efficient autophagic flux. The chain is Ras-related protein Rab-2A (RAB2A) from Oryctolagus cuniculus (Rabbit).